The primary structure comprises 65 residues: Protein C' (65 aa).

This sequence belongs to the rhabdoviruses C protein family.

Functionally, seems to stimulates transcription by the viral polymerase. May play a role in viral pathogenesis or transmission by insects vectors. The chain is Protein C' (P) from Vesicular stomatitis New Jersey virus (strain Missouri subtype Hazelhurst) (VSNJV).